The following is a 548-amino-acid chain: Membrane protein insertase YidC (548 aa).

The chain crosses the membrane as a helical span at residues 6-26; that stretch reads NLLVIALLFVSFMIWQAWEQD. The interval 28 to 55 is disordered; it reads NPQPQAQQTTQTTTTAAGSAADQGVPAS. Positions 30–50 are enriched in low complexity; the sequence is QPQAQQTTQTTTTAAGSAADQ. The next 4 membrane-spanning stretches (helical) occupy residues 350–370, 420–440, 458–478, and 499–519; these read FVGN…GIMY, LGGC…YYML, LSAQ…MFFI, and PVIF…YYIV.

This sequence belongs to the OXA1/ALB3/YidC family. Type 1 subfamily. In terms of assembly, interacts with the Sec translocase complex via SecD. Specifically interacts with transmembrane segments of nascent integral membrane proteins during membrane integration.

The protein resides in the cell inner membrane. Functionally, required for the insertion and/or proper folding and/or complex formation of integral membrane proteins into the membrane. Involved in integration of membrane proteins that insert both dependently and independently of the Sec translocase complex, as well as at least some lipoproteins. Aids folding of multispanning membrane proteins. This is Membrane protein insertase YidC from Shigella dysenteriae serotype 1 (strain Sd197).